The following is a 140-amino-acid chain: Probable NADH dehydrogenase [ubiquinone] iron-sulfur protein 6, mitochondrial (140 aa).

The protein belongs to the complex I NDUFS6 subunit family. Complex I is composed of 45 different subunits. This is a component of the iron-sulfur (IP) fragment of the enzyme.

The protein localises to the mitochondrion inner membrane. Accessory subunit of the mitochondrial membrane respiratory chain NADH dehydrogenase (Complex I), that is believed not to be involved in catalysis. Complex I functions in the transfer of electrons from NADH to the respiratory chain. The immediate electron acceptor for the enzyme is believed to be ubiquinone. The chain is Probable NADH dehydrogenase [ubiquinone] iron-sulfur protein 6, mitochondrial (nduf-6) from Caenorhabditis elegans.